Reading from the N-terminus, the 112-residue chain is Histone H2A, sperm (112 aa).

Residue glutamine 91 is modified to N5-methylglutamine. Lysine 106 participates in a covalent cross-link: Glycyl lysine isopeptide (Lys-Gly) (interchain with G-Cter in ubiquitin).

This sequence belongs to the histone H2A family. In terms of assembly, the nucleosome is a histone octamer containing two molecules each of H2A, H2B, H3 and H4 assembled in one H3-H4 heterotetramer and two H2A-H2B heterodimers. The octamer wraps approximately 147 bp of DNA. Post-translationally, monoubiquitination gives a specific tag for epigenetic transcriptional repression.

It localises to the nucleus. The protein resides in the chromosome. Its function is as follows. Core component of nucleosome. Nucleosomes wrap and compact DNA into chromatin, limiting DNA accessibility to the cellular machineries which require DNA as a template. Histones thereby play a central role in transcription regulation, DNA repair, DNA replication and chromosomal stability. DNA accessibility is regulated via a complex set of post-translational modifications of histones, also called histone code, and nucleosome remodeling. In Lytechinus pictus (Painted sea urchin), this protein is Histone H2A, sperm.